A 154-amino-acid chain; its full sequence is 6,7-dimethyl-8-ribityllumazine synthase (154 aa).

Residues F22, 56 to 58, and 80 to 82 contribute to the 5-amino-6-(D-ribitylamino)uracil site; these read AFE and AVI. 85–86 contributes to the (2S)-2-hydroxy-3-oxobutyl phosphate binding site; sequence AT. H88 serves as the catalytic Proton donor. F113 is a binding site for 5-amino-6-(D-ribitylamino)uracil. R127 is a (2S)-2-hydroxy-3-oxobutyl phosphate binding site.

Belongs to the DMRL synthase family. In terms of assembly, forms an icosahedral capsid composed of 60 subunits, arranged as a dodecamer of pentamers.

The enzyme catalyses (2S)-2-hydroxy-3-oxobutyl phosphate + 5-amino-6-(D-ribitylamino)uracil = 6,7-dimethyl-8-(1-D-ribityl)lumazine + phosphate + 2 H2O + H(+). It functions in the pathway cofactor biosynthesis; riboflavin biosynthesis; riboflavin from 2-hydroxy-3-oxobutyl phosphate and 5-amino-6-(D-ribitylamino)uracil: step 1/2. Catalyzes the formation of 6,7-dimethyl-8-ribityllumazine by condensation of 5-amino-6-(D-ribitylamino)uracil with 3,4-dihydroxy-2-butanone 4-phosphate. This is the penultimate step in the biosynthesis of riboflavin. The polypeptide is 6,7-dimethyl-8-ribityllumazine synthase (Geobacillus kaustophilus (strain HTA426)).